Consider the following 350-residue polypeptide: Probable poly-beta-1,6-N-acetyl-D-glucosamine export protein (350 aa).

10 consecutive transmembrane segments (helical) span residues 8-28 (LVYL…LTQI), 40-60 (LVLQ…FIIL), 83-103 (YILI…SLLT), 119-139 (QWYG…YIIF), 146-166 (FNSK…LYYF), 182-202 (LSEN…AYMG), 216-236 (LVIM…LANG), 254-274 (IMFI…FNTI), 276-296 (MISA…DSLF), and 308-328 (VFLA…GMIL).

The protein belongs to the acyltransferase 3 family.

The protein resides in the cell membrane. Its function is as follows. Presumably involved in the export of the biofilm adhesin polysaccharide poly-beta-1,6-N-acetyl-D-glucosamine (PNAG, also referred to as PIA) across the cell membrane. The polypeptide is Probable poly-beta-1,6-N-acetyl-D-glucosamine export protein (icaC) (Staphylococcus aureus (strain NCTC 8325 / PS 47)).